The chain runs to 214 residues: Cytochrome c biogenesis ATP-binding export protein CcmA (214 aa).

The ABC transporter domain occupies 12-214 (LAAHDLAFSR…TRMLTLEVAA (203 aa)). 44-51 (GDNGAGKT) contributes to the ATP binding site.

It belongs to the ABC transporter superfamily. CcmA exporter (TC 3.A.1.107) family. In terms of assembly, the complex is composed of two ATP-binding proteins (CcmA) and two transmembrane proteins (CcmB).

It localises to the cell inner membrane. The enzyme catalyses heme b(in) + ATP + H2O = heme b(out) + ADP + phosphate + H(+). Functionally, part of the ABC transporter complex CcmAB involved in the biogenesis of c-type cytochromes; once thought to export heme, this seems not to be the case, but its exact role is uncertain. Responsible for energy coupling to the transport system. The polypeptide is Cytochrome c biogenesis ATP-binding export protein CcmA (Xanthomonas axonopodis pv. citri (strain 306)).